A 425-amino-acid chain; its full sequence is Enolase (425 aa).

Residue Q163 coordinates (2R)-2-phosphoglycerate. The active-site Proton donor is E205. D242, E285, and D312 together coordinate Mg(2+). Residues K337, R366, S367, and K388 each coordinate (2R)-2-phosphoglycerate. K337 acts as the Proton acceptor in catalysis.

This sequence belongs to the enolase family. Mg(2+) serves as cofactor.

It localises to the cytoplasm. The protein localises to the secreted. It is found in the cell surface. The enzyme catalyses (2R)-2-phosphoglycerate = phosphoenolpyruvate + H2O. It functions in the pathway carbohydrate degradation; glycolysis; pyruvate from D-glyceraldehyde 3-phosphate: step 4/5. Functionally, catalyzes the reversible conversion of 2-phosphoglycerate (2-PG) into phosphoenolpyruvate (PEP). It is essential for the degradation of carbohydrates via glycolysis. This is Enolase from Ruegeria pomeroyi (strain ATCC 700808 / DSM 15171 / DSS-3) (Silicibacter pomeroyi).